A 90-amino-acid chain; its full sequence is Progonadoliberin-3 (90 aa).

The signal sequence occupies residues 1–23 (MDVSSKVVVQVLLLALVVQVTLC). At Gln-24 the chain carries Pyrrolidone carboxylic acid. Gly-33 carries the glycine amide modification.

It belongs to the GnRH family. As to expression, expressed in neuron cell bodies of the nucleus olfactoretinalis.

It is found in the secreted. In terms of biological role, stimulates the secretion of gonadotropins. This is Progonadoliberin-3 (gnrh3) from Oryzias latipes (Japanese rice fish).